The following is a 1500-amino-acid chain: Alpha-1-macroglobulin (1500 aa).

The N-terminal stretch at 1–24 is a signal peptide; the sequence is MRRNQLPIPVFLLLLLLLPRDATA. Cys48 and Cys86 form a disulfide bridge. 3 N-linked (GlcNAc...) asparagine glycosylation sites follow: Asn55, Asn61, and Asn157. Intrachain disulfides connect Cys249/Cys298 and Cys267/Cys286. N-linked (GlcNAc...) asparagine glycosylation is found at Asn382 and Asn412. A disulfide bridge connects residues Cys469 and Cys562. N-linked (GlcNAc...) asparagine glycosylation occurs at Asn568. 6 disulfide bridges follow: Cys594-Cys785, Cys642-Cys689, Cys835-Cys863, Cys861-Cys897, Cys935-Cys1344, and Cys1094-Cys1142. The interval 686–746 is bait region; the sequence is PRYCPMYQAY…QEVEVRETVR (61 aa). N-linked (GlcNAc...) asparagine glycans are attached at residues Asn883 and Asn944. Positions 986–989 form a cross-link, isoglutamyl cysteine thioester (Cys-Gln); it reads CGEQ. N-linked (GlcNAc...) asparagine glycosylation occurs at Asn1005. The interval 1360 to 1500 is receptor-binding domain; the sequence is EGEAPFTLKV…FSSDSEQGNA (141 aa). N-linked (GlcNAc...) asparagine glycosylation is found at Asn1390 and Asn1448.

This sequence belongs to the protease inhibitor I39 (alpha-2-macroglobulin) family. As to quaternary structure, homotetramer; disulfide-linked. Widely expressed. Highest level in ovary, testis, uterus and prostate. Protein found in plasma.

It is found in the secreted. Functionally, is able to inhibit all four classes of proteinases by a unique 'trapping' mechanism. This protein has a peptide stretch, called the 'bait region' which contains specific cleavage sites for different proteinases. When a proteinase cleaves the bait region, a conformational change is induced in the protein which traps the proteinase. The entrapped enzyme remains active against low molecular weight substrates (activity against high molecular weight substrates is greatly reduced). Following cleavage in the bait region a thioester bond is hydrolyzed and mediates the covalent binding of the protein to the proteinase. This Rattus norvegicus (Rat) protein is Alpha-1-macroglobulin.